Here is a 123-residue protein sequence, read N- to C-terminus: UPF0102 protein Pput_4400 (123 aa).

This sequence belongs to the UPF0102 family.

In Pseudomonas putida (strain ATCC 700007 / DSM 6899 / JCM 31910 / BCRC 17059 / LMG 24140 / F1), this protein is UPF0102 protein Pput_4400.